A 232-amino-acid chain; its full sequence is Octanoyltransferase (232 aa).

Residues 33 to 216 (GRAQDTVILL…HLVRALSNGS (184 aa)) form the BPL/LPL catalytic domain. Substrate is bound by residues 71–78 (RGGRITWH), 146–148 (AIG), and 159–161 (GFA). The active-site Acyl-thioester intermediate is C177.

It belongs to the LipB family.

It localises to the cytoplasm. It carries out the reaction octanoyl-[ACP] + L-lysyl-[protein] = N(6)-octanoyl-L-lysyl-[protein] + holo-[ACP] + H(+). It functions in the pathway protein modification; protein lipoylation via endogenous pathway; protein N(6)-(lipoyl)lysine from octanoyl-[acyl-carrier-protein]: step 1/2. Catalyzes the transfer of endogenously produced octanoic acid from octanoyl-acyl-carrier-protein onto the lipoyl domains of lipoate-dependent enzymes. Lipoyl-ACP can also act as a substrate although octanoyl-ACP is likely to be the physiological substrate. This chain is Octanoyltransferase, found in Clavibacter sepedonicus (Clavibacter michiganensis subsp. sepedonicus).